Consider the following 1253-residue polypeptide: Structural polyprotein (1253 aa).

The tract at residues 43–77 (VQAQQMQQLISAVSALTTKQNGKAPKKPKKKPQKA) is host transcription inhibition. The disordered stretch occupies residues 58 to 110 (LTTKQNGKAPKKPKKKPQKAKAKKNEQQKKNENKKPPPKQKNPAKKKKPGKRE). Positions 66 to 79 (APKKPKKKPQKAKA) are enriched in basic residues. A Nuclear localization signal motif is present at residues 70 to 106 (PKKKPQKAKAKKNEQQKKNENKKPPPKQKNPAKKKKP). The segment covering 80–92 (KKNEQQKKNENKK) has biased composition (basic and acidic residues). Residues 90–121 (NKKPPPKQKNPAKKKKPGKRERMCMKIENDCI) form a binding to the viral RNA region. The segment covering 93–108 (PPPKQKNPAKKKKPGK) has biased composition (basic residues). The ribosome-binding stretch occupies residues 106–120 (PGKRERMCMKIENDC). A disulfide bridge connects residues Cys120 and Cys135. Residues 120–268 (CIFEVKLDGK…RYTPEGTEEW (149 aa)) enclose the Peptidase S3 domain. Residue His146 is the Charge relay system of the active site. The short motif at 151 to 161 (IDNPDLAKLTY) is the Nuclear export signal element. The tract at residues 162 to 167 (KKSSKY) is interaction with spike glycoprotein E2. The active-site Charge relay system is Asp168. The dimerization of the capsid protein stretch occupies residues 190–200 (PEGHYNWHHGA). Catalysis depends on Ser220, which acts as the Charge relay system. The dimerization of the capsid protein stretch occupies residues 226–230 (DNKGR). The segment at 269–280 (SAALMMCVLANV) is functions as an uncleaved signal peptide for the precursor of protein E3/E2. 3 cysteine pairs are disulfide-bonded: Cys275–Cys284, Cys289–Cys293, and Cys292–Cys324. The N-linked (GlcNAc...) asparagine; by host glycan is linked to Asn279. N-linked (GlcNAc...) asparagine; by host glycosylation is present at Asn325. The Extracellular portion of the chain corresponds to 333–694 (SVTKHFNVYK…EIILYYYGLY (362 aa)). Disulfide bonds link Cys351–Cys457, Cys354–Cys360, Cys423–Cys437, Cys485–Cys597, Cys533–Cys557, and Cys535–Cys552. Interaction with host Mxra8 receptor regions lie at residues 358–361 (QFCY) and 394–396 (HEH). The tract at residues 516-519 (QSGN) is interaction with host Mxra8 receptor. Asn532 is a glycosylation site (N-linked (GlcNAc...) asparagine; by host). The interval 548-554 (TINSCKI) is interaction with host Mxra8 receptor. The N-linked (GlcNAc...) asparagine; by host glycan is linked to Asn594. Residues 695–715 (PAATIAAVSAAGLAVVLSLLA) form a helical membrane-spanning segment. Topologically, residues 716–754 (SCYMFATARRKCLTPYALTPGAVVPVTLGVLCCAPRAHA) are cytoplasmic. Residue Cys717 is the site of S-stearoyl cysteine; by host attachment. The interval 722–726 (TARRK) is interaction with the capsid protein. A lipid anchor (S-stearoyl cysteine; by host) is attached at Cys727. Residues 727–747 (CLTPYALTPGAVVPVTLGVLC) are transient transmembrane before p62-6K protein processing. Cys727 and Cys748 form a disulfide bridge. 2 S-palmitoyl cysteine; by host lipidation sites follow: Cys747 and Cys748. At 755-769 (ASFAESMAYLWDENQ) the chain is on the extracellular side. The N-linked (GlcNAc...) asparagine; by host glycan is linked to Asn768. A helical membrane pass occupies residues 770-790 (TLFWLELATPLAAIIILVCCL). Topologically, residues 791-792 (KN) are cytoplasmic. Residues 793–813 (LLCCCKPLSFLVLVSLGTPVV) traverse the membrane as a helical segment. Extracellular segments follow at residues 814–815 (KS) and 826–1227 (VGFP…WVQR). Cystine bridges form between Cys864/Cys929, Cys877/Cys909, Cys878/Cys911, and Cys883/Cys893. The interval 899–916 (VYPFMWGGAYCFCDTENT) is E1 fusion peptide loop. N-linked (GlcNAc...) asparagine; by host glycans are attached at residues Asn956 and Asn1085. Disulfide bonds link Cys1074-Cys1086, Cys1116-Cys1191, Cys1121-Cys1195, and Cys1143-Cys1185. The helical transmembrane segment at 1228-1248 (VAGGLGGLTLAAVAVLILVTC) threads the bilayer. Residue Cys1248 is the site of S-palmitoyl cysteine; by host attachment. The Cytoplasmic portion of the chain corresponds to 1249–1253 (VTMRR).

Homodimer. Homomultimer. Interacts with host karyopherin KPNA4; this interaction allows the nuclear import of the viral capsid protein. Interacts with spike glycoprotein E2. Interacts with host IRAK1; the interaction leads to inhibition of IRAK1-dependent signaling. In terms of assembly, the precursor of protein E3/E2 and E1 form a heterodimer shortly after synthesis. As to quaternary structure, interacts with spike glycoprotein E2. The precursor of protein E3/E2 and E1 form a heterodimer shortly after synthesis. Processing of the precursor of protein E3/E2 into E2 and E3 results in a heterodimer of the spike glycoproteins E2 and E1. Spike at virion surface are constituted of a trimer of E2-E1 heterodimers. After target cell attachment and endocytosis, E1 change conformation to form homotrimers. Interacts with 6K protein. E1/E2 heterodimer interacts with host LDLR. Interacts with spike glycoprotein E1. Processing of the precursor of protein E3/E2 into E2 and E3 results in a heterodimer of the spike glycoproteins E2 and E1. Spike at virion surface are constituted of a trimer of E2-E1 heterodimers. Interacts with 6K protein. Interacts with host MXRA8; this interaction mediates virus entry. In terms of assembly, oligomer. Interacts with spike glycoprotein E1. Interacts with spike glycoprotein E2. Structural polyprotein: Specific enzymatic cleavages in vivo yield mature proteins. Capsid protein is auto-cleaved during polyprotein translation, unmasking a signal peptide at the N-terminus of the precursor of E3/E2. The remaining polyprotein is then targeted to the host endoplasmic reticulum, where host signal peptidase cleaves it into pE2, 6K and E1 proteins. pE2 is further processed to mature E3 and E2 by host furin in trans-Golgi vesicle. Post-translationally, palmitoylated via thioester bonds. These palmitoylations may induce disruption of the C-terminus transmembrane. This would result in the reorientation of E2 C-terminus from lumenal to cytoplasmic side. In terms of processing, N-glycosylated. Palmitoylated via thioester bonds.

It is found in the virion. Its subcellular location is the host cytoplasm. The protein localises to the host cell membrane. The protein resides in the host nucleus. It localises to the virion membrane. It is found in the host Golgi apparatus. Its subcellular location is the host trans-Golgi network. The protein localises to the host endoplasmic reticulum. It catalyses the reaction Autocatalytic release of the core protein from the N-terminus of the togavirus structural polyprotein by hydrolysis of a -Trp-|-Ser- bond.. Forms an icosahedral capsid with a T=4 symmetry composed of 240 copies of the capsid protein surrounded by a lipid membrane through which penetrate 80 spikes composed of trimers of E1-E2 heterodimers. The capsid protein binds to the viral RNA genome at a site adjacent to a ribosome binding site for viral genome translation following genome release. Possesses a protease activity that results in its autocatalytic cleavage from the nascent structural protein. Following its self-cleavage, the capsid protein transiently associates with ribosomes, and within several minutes the protein binds to viral RNA and rapidly assembles into icosahedric core particles. The resulting nucleocapsid eventually associates with the cytoplasmic domain of the spike glycoprotein E2 at the cell membrane, leading to budding and formation of mature virions. In case of infection, new virions attach to target cells and after clathrin-mediated endocytosis their membrane fuses with the host endosomal membrane. This leads to the release of the nucleocapsid into the cytoplasm, followed by an uncoating event necessary for the genomic RNA to become accessible. The uncoating might be triggered by the interaction of capsid proteins with ribosomes. Binding of ribosomes would release the genomic RNA since the same region is genomic RNA-binding and ribosome-binding. Specifically inhibits interleukin-1 receptor-associated kinase 1/IRAK1-dependent signaling during viral entry, representing a means by which the alphaviruses may evade innate immune detection and activation prior to viral gene expression. Its function is as follows. Provides the signal sequence for the translocation of the precursor of protein E3/E2 to the host endoplasmic reticulum. Furin-cleaved E3 remains associated with spike glycoprotein E1 and mediates pH protection of the latter during the transport via the secretory pathway. After virion release from the host cell, the assembly protein E3 is gradually released in the extracellular space. In terms of biological role, plays a role in viral attachment to target host cell, by binding to the cell receptor MXRA8. The host LDLR may also act as a cell receptor for viral entry. Synthesized as a p62 precursor which is processed by furin at the cell membrane just before virion budding, giving rise to E2-E1 heterodimer. The p62-E1 heterodimer is stable, whereas E2-E1 is unstable and dissociate at low pH. p62 is processed at the last step, presumably to avoid E1 fusion activation before its final export to cell surface. E2 C-terminus contains a transitory transmembrane that would be disrupted by palmitoylation, resulting in reorientation of the C-terminal tail from lumenal to cytoplasmic side. This step is critical since E2 C-terminus is involved in budding by interacting with capsid proteins. This release of E2 C-terminus in cytoplasm occurs lately in protein export, and precludes premature assembly of particles at the endoplasmic reticulum membrane. Functionally, acts as a viroporin that participates in virus glycoprotein processing and transport to the plasma membrane, cell permeabilization and budding of viral particles. Disrupts the calcium homeostasis of the cell, probably at the endoplasmic reticulum level. This leads to cytoplasmic calcium elevation. Because of its lipophilic properties, the 6K protein is postulated to influence the selection of lipids that interact with the transmembrane domains of the glycoproteins, which, in turn, affects the deformability of the bilayer required for the extreme curvature that occurs as budding proceeds. Present in low amount in virions, about 3% compared to viral glycoproteins. Class II viral fusion protein. Fusion activity is inactive as long as E1 is bound to E2 in mature virion. After virus attachment to target cell via host MXRA8 and endocytosis, acidification of the endosome induce dissociation of E1/E2 heterodimer and concomitant trimerization of the E1 subunits. This E1 trimer is fusion active, and promotes release of viral nucleocapsid in cytoplasm after endosome and viral membrane fusion. Efficient fusion requires the presence of cholesterol and sphingolipid in the target membrane. This is Structural polyprotein from Aedes vexans (Inland floodwater mosquito).